The chain runs to 242 residues: N-glycosylase/DNA lyase (242 aa).

Residues glutamine 25, serine 52, and tryptophan 63 each coordinate 8-oxoguanine. The helix-hairpin-helix stretch occupies residues 119-183 (KSYYRDMNRL…VDARIERITR (65 aa)). Residue lysine 143 is the Schiff-base intermediate with DNA of the active site. 8-oxoguanine contacts are provided by phenylalanine 147 and proline 173. Aspartate 175 is a catalytic residue. Residues aspartate 209 and tryptophan 213 each coordinate 8-oxoguanine.

This sequence belongs to the archaeal N-glycosylase/DNA lyase (AGOG) family.

It carries out the reaction 2'-deoxyribonucleotide-(2'-deoxyribose 5'-phosphate)-2'-deoxyribonucleotide-DNA = a 3'-end 2'-deoxyribonucleotide-(2,3-dehydro-2,3-deoxyribose 5'-phosphate)-DNA + a 5'-end 5'-phospho-2'-deoxyribonucleoside-DNA + H(+). Its function is as follows. DNA repair enzyme that is part of the base excision repair (BER) pathway; protects from oxidative damage by removing the major product of DNA oxidation, 8-oxoguanine (GO), from single- and double-stranded DNA substrates. This chain is N-glycosylase/DNA lyase, found in Methanopyrus kandleri (strain AV19 / DSM 6324 / JCM 9639 / NBRC 100938).